Reading from the N-terminus, the 154-residue chain is Large ribosomal subunit protein uL13 (154 aa).

This sequence belongs to the universal ribosomal protein uL13 family. Part of the 50S ribosomal subunit.

Its function is as follows. This protein is one of the early assembly proteins of the 50S ribosomal subunit, although it is not seen to bind rRNA by itself. It is important during the early stages of 50S assembly. This Rhodopseudomonas palustris (strain BisB18) protein is Large ribosomal subunit protein uL13.